Reading from the N-terminus, the 300-residue chain is UDP-N-acetylenolpyruvoylglucosamine reductase (300 aa).

Residues 29 to 193 form the FAD-binding PCMH-type domain; the sequence is TGGPADLLVF…LSATFKLRSG (165 aa). Arg-172 is an active-site residue. Residue Ser-222 is the Proton donor of the active site. Glu-292 is a catalytic residue.

Belongs to the MurB family. It depends on FAD as a cofactor.

It localises to the cytoplasm. The catalysed reaction is UDP-N-acetyl-alpha-D-muramate + NADP(+) = UDP-N-acetyl-3-O-(1-carboxyvinyl)-alpha-D-glucosamine + NADPH + H(+). The protein operates within cell wall biogenesis; peptidoglycan biosynthesis. Cell wall formation. This chain is UDP-N-acetylenolpyruvoylglucosamine reductase, found in Pediococcus pentosaceus (strain ATCC 25745 / CCUG 21536 / LMG 10740 / 183-1w).